Here is a 200-residue protein sequence, read N- to C-terminus: Proteasome subunit beta 2 (200 aa).

The propeptide at 1–7 is removed in mature form; by autocatalysis; the sequence is METKKTG. The active-site Nucleophile is T8.

The protein belongs to the peptidase T1B family. As to quaternary structure, the 20S proteasome core is composed of 14 alpha and 14 beta subunits that assemble into four stacked heptameric rings, resulting in a barrel-shaped structure. The two inner rings, each composed of seven catalytic beta subunits, are sandwiched by two outer rings, each composed of seven alpha subunits. The catalytic chamber with the active sites is on the inside of the barrel. Has a gated structure, the ends of the cylinder being occluded by the N-termini of the alpha-subunits. Is capped at one or both ends by the proteasome regulatory ATPase, PAN.

It localises to the cytoplasm. The catalysed reaction is Cleavage of peptide bonds with very broad specificity.. Its activity is regulated as follows. The formation of the proteasomal ATPase PAN-20S proteasome complex, via the docking of the C-termini of PAN into the intersubunit pockets in the alpha-rings, triggers opening of the gate for substrate entry. Interconversion between the open-gate and close-gate conformations leads to a dynamic regulation of the 20S proteasome proteolysis activity. Its function is as follows. Component of the proteasome core, a large protease complex with broad specificity involved in protein degradation. The chain is Proteasome subunit beta 2 from Thermococcus onnurineus (strain NA1).